We begin with the raw amino-acid sequence, 287 residues long: MAARMIGEDDVRKFVPSRRRDSRKGENGKVLVVGGSYIYHGAPIFSSVAALRSGCDLVYTAVPKINAPATRAASPSMIVIPLADQKLTRGAARKLAGQIPTGLDSATIGMGLAIAERSALKVLVVALVDMDVRISLDAGALVREILGDISGKNCLVTPHAGEFKRLFGESPPADIEGRASMVERLAQEHGITILLKGPTDVISDGNRTLLNDRGAPAMTVGGTGDVLSGIAAGILARNRSPLESAAAAAYINGLAGEAAQEMHGLHITAMDLCELLPSVMKPFDRLE.

Positions 7–283 (GEDDVRKFVP…ELLPSVMKPF (277 aa)) constitute a YjeF C-terminal domain. (6S)-NADPHX is bound by residues Ala-42 and His-159. AMP-binding positions include 196 to 200 (KGPTD) and Gly-224. (6S)-NADPHX is bound at residue Asp-225.

This sequence belongs to the NnrD/CARKD family. Homotetramer. Requires Mg(2+) as cofactor.

The enzyme catalyses (6S)-NADHX + ADP = AMP + phosphate + NADH + H(+). It carries out the reaction (6S)-NADPHX + ADP = AMP + phosphate + NADPH + H(+). Its function is as follows. Catalyzes the dehydration of the S-form of NAD(P)HX at the expense of ADP, which is converted to AMP. Together with NAD(P)HX epimerase, which catalyzes the epimerization of the S- and R-forms, the enzyme allows the repair of both epimers of NAD(P)HX, a damaged form of NAD(P)H that is a result of enzymatic or heat-dependent hydration. The sequence is that of ADP-dependent (S)-NAD(P)H-hydrate dehydratase from Cenarchaeum symbiosum (strain A).